The following is a 173-amino-acid chain: Copper transport protein ctr5 (173 aa).

Over Met1–Lys54 the chain is Extracellular. A helical membrane pass occupies residues Phe55–Val75. Residues Gln76–Ser135 are Cytoplasmic-facing. Residues Phe136–Ala156 traverse the membrane as a helical segment. Over Ser157–Arg173 the chain is Extracellular.

Belongs to the copper transporter (Ctr) (TC 1.A.56) family. SLC31A subfamily. Interacts with ctr4.

The protein resides in the membrane. Its function is as follows. Required for high affinity copper (probably reduced Cu I) transport into the cell. The polypeptide is Copper transport protein ctr5 (ctr5) (Schizosaccharomyces pombe (strain 972 / ATCC 24843) (Fission yeast)).